A 61-amino-acid chain; its full sequence is Insect toxin AaHIT5 (61 aa).

The 61-residue stretch at 1-61 folds into the LCN-type CS-alpha/beta domain; the sequence is DGYIKRHDGC…AWKSETNTCD (61 aa). Disulfide bonds link Cys10–Cys60, Cys14–Cys35, Cys21–Cys42, and Cys25–Cys44.

As to expression, expressed by the venom gland.

It localises to the secreted. Excitatory insect toxins induce a spastic paralysis. They bind voltage-independently to sodium channels (Nav) and shift the voltage of activation toward more negative potentials thereby affecting sodium channel activation and promoting spontaneous and repetitive firing. This toxin elicits excitatory activity with no flaccid paralysis despite its high degree of sequence similarity with other depressant insect toxins. This toxin is active only on insects. This Androctonus australis (Sahara scorpion) protein is Insect toxin AaHIT5.